The primary structure comprises 111 residues: Nucleoid-associated protein Teth39_2199 (111 aa).

Belongs to the YbaB/EbfC family. Homodimer.

It is found in the cytoplasm. The protein localises to the nucleoid. Functionally, binds to DNA and alters its conformation. May be involved in regulation of gene expression, nucleoid organization and DNA protection. This is Nucleoid-associated protein Teth39_2199 from Thermoanaerobacter pseudethanolicus (strain ATCC 33223 / 39E) (Clostridium thermohydrosulfuricum).